A 376-amino-acid polypeptide reads, in one-letter code: 23S rRNA (uracil(747)-C(5))-methyltransferase RlmC (376 aa).

[4Fe-4S] cluster-binding residues include cysteine 3, cysteine 11, cysteine 14, and cysteine 87. The S-adenosyl-L-methionine site is built by glutamine 212, phenylalanine 241, glutamate 262, and asparagine 307. Cysteine 334 acts as the Nucleophile in catalysis.

This sequence belongs to the class I-like SAM-binding methyltransferase superfamily. RNA M5U methyltransferase family. RlmC subfamily.

It catalyses the reaction uridine(747) in 23S rRNA + S-adenosyl-L-methionine = 5-methyluridine(747) in 23S rRNA + S-adenosyl-L-homocysteine + H(+). Catalyzes the formation of 5-methyl-uridine at position 747 (m5U747) in 23S rRNA. The polypeptide is 23S rRNA (uracil(747)-C(5))-methyltransferase RlmC (Yersinia pseudotuberculosis serotype I (strain IP32953)).